Consider the following 128-residue polypeptide: NHP2-like protein 1 (128 aa).

The interval 36-48 (RKGANEATKTLNR) is interaction with U4 snRNA and U4atac snRNA. The important for U4 snRNA-binding stretch occupies residues 96 to 128 (SRPVIACSVTIKEGSQLKPQIQSVQQAIERLLV).

Belongs to the eukaryotic ribosomal protein eL8 family. Identified in the spliceosome B complex. Component of the U4/U6-U5 tri-snRNP complex. Part of the small subunit (SSU) processome, composed of more than 70 proteins and the RNA chaperone small nucleolar RNA (snoRNA) U3.

It localises to the nucleus. The protein resides in the nucleolus. Functionally, part of the small subunit (SSU) processome, first precursor of the small eukaryotic ribosomal subunit. During the assembly of the SSU processome in the nucleolus, many ribosome biogenesis factors, an RNA chaperone and ribosomal proteins associate with the nascent pre-rRNA and work in concert to generate RNA folding, modifications, rearrangements and cleavage as well as targeted degradation of pre-ribosomal RNA by the RNA exosome. Involved in pre-mRNA splicing as component of the spliceosome. Binds to the 5'-stem-loop of U4 snRNA and thereby contributes to spliceosome assembly. The protein undergoes a conformational change upon RNA-binding. Core component of box C/D small nucleolar ribonucleoprotein (snoRNP) complexes that function in methylation of multiple sites on ribosomal RNAs (rRNAs) and messenger RNAs (mRNAs). The protein is NHP2-like protein 1 of Xenopus laevis (African clawed frog).